An 863-amino-acid chain; its full sequence is Paramyosin (863 aa).

Residues 1–18 are nonhelical region; that stretch reads MSESHVKISRTIIRGTSP. Residues 19 to 836 are a coiled coil; that stretch reads STVRLESRVR…ERTITIKRTI (818 aa). A nonhelical region region spans residues 837–863; that stretch reads GGPGSRAVSVVREINSVSRGNRATSIM.

It belongs to the paramyosin family. As to quaternary structure, homodimer or monomer in secreted form.

It localises to the cytoplasm. Its subcellular location is the myofibril. The protein localises to the secreted. Functionally, paramyosin is a major structural component of many thick filaments isolated from invertebrate muscles. It is a prominent antigen in human cysticercosis, may have a role as a modulator of the host immune response. It is able to bind collagen and has complement inhibitor activity. In Taenia solium (Pork tapeworm), this protein is Paramyosin (PMY).